The following is a 455-amino-acid chain: Chromosomal replication initiator protein DnaA (455 aa).

The tract at residues 1 to 82 (MNRNTSSLWA…NPDFVVKLVE (82 aa)) is domain I, interacts with DnaA modulators. Residues 82-117 (EGVKPAPKQNNIVTTKQNAETAVDSEQHLQSVEFKT) form a domain II region. The domain III, AAA+ region stretch occupies residues 118 to 335 (GLNSNHLFEN…GALNRVIANA (218 aa)). The ATP site is built by G163, G165, K166, and T167. The interval 336-455 (EFTGKTITID…WSNLIRTLSA (120 aa)) is domain IV, binds dsDNA.

Belongs to the DnaA family. As to quaternary structure, oligomerizes as a right-handed, spiral filament on DNA at oriC.

It is found in the cytoplasm. Plays an essential role in the initiation and regulation of chromosomal replication. ATP-DnaA binds to the origin of replication (oriC) to initiate formation of the DNA replication initiation complex once per cell cycle. Binds the DnaA box (a 9 base pair repeat at the origin) and separates the double-stranded (ds)DNA. Forms a right-handed helical filament on oriC DNA; dsDNA binds to the exterior of the filament while single-stranded (ss)DNA is stabiized in the filament's interior. The ATP-DnaA-oriC complex binds and stabilizes one strand of the AT-rich DNA unwinding element (DUE), permitting loading of DNA polymerase. After initiation quickly degrades to an ADP-DnaA complex that is not apt for DNA replication. Binds acidic phospholipids. This Actinobacillus succinogenes (strain ATCC 55618 / DSM 22257 / CCUG 43843 / 130Z) protein is Chromosomal replication initiator protein DnaA.